Reading from the N-terminus, the 406-residue chain is Peptide antibiotic transporter SbmA (406 aa).

The Periplasmic segment spans residues 1 to 11; that stretch reads MFKSFFPKPGT. The helical transmembrane segment at 12–32 threads the bilayer; that stretch reads FFLSAFVWALIAVIFWQAGGG. Over 33–56 the chain is Cytoplasmic; sequence DWVARITGASGQIPISAARFWSLD. Residues 57-77 form a helical membrane-spanning segment; it reads FLIFYAYYIVCVGLFALFWFI. Residues 78–87 are Periplasmic-facing; that stretch reads YSPHRWQYWS. Residues 88–108 traverse the membrane as a helical segment; it reads ILGTALIIFVTWFLVEVGVAV. At 109–137 the chain is on the cytoplasmic side; the sequence is NAWYAPFYDLIQTALSSPHKVTIEQFYRE. The chain crosses the membrane as a helical span at residues 138–158; that stretch reads VGVFLGIALIAVVISVLNNFF. The Periplasmic segment spans residues 159–205; the sequence is VSHYVFRWRTAMNEYYMANWQQLRHIEGAAQRVQEDTMRFASTLENM. Residues 206–226 form a helical membrane-spanning segment; it reads GVSFINAIMTLIAFLPVLVTL. Over 227–242 the chain is Cytoplasmic; the sequence is SAHVPELPIIGHIPYG. Residues 243-263 form a helical membrane-spanning segment; the sequence is LVIAAIVWSLMGTGLLAVVGI. Over 264–331 the chain is Periplasmic; sequence KLPGLEFKNQ…ARILYLQVDN (68 aa). A helical membrane pass occupies residues 332-352; the sequence is VFGLFLLFPSIVAGTITLGLM. The Cytoplasmic segment spans residues 353–406; that stretch reads TQITNVFGQVRGAFQYLINSWTTLVELMSIYKRLRSFEHELDGDKIQEVTHTLS.

This sequence belongs to the peptide uptake permease (PUP) (TC 9.A.18) family.

It is found in the cell inner membrane. Its function is as follows. Uptake of antimicrobial peptides. This chain is Peptide antibiotic transporter SbmA (sbmA), found in Escherichia coli O157:H7.